We begin with the raw amino-acid sequence, 880 residues long: DNA mismatch repair protein MutS (880 aa).

635 to 642 (GPNMGGKS) is a binding site for ATP.

Belongs to the DNA mismatch repair MutS family.

Its function is as follows. This protein is involved in the repair of mismatches in DNA. It is possible that it carries out the mismatch recognition step. This protein has a weak ATPase activity. This Nitrosomonas eutropha (strain DSM 101675 / C91 / Nm57) protein is DNA mismatch repair protein MutS.